Consider the following 486-residue polypeptide: Ribulose bisphosphate carboxylase large chain 1 (486 aa).

Residues Asn125 and Thr175 each contribute to the substrate site. Lys177 acts as the Proton acceptor in catalysis. Lys179 serves as a coordination point for substrate. Positions 203, 205, and 206 each coordinate Mg(2+). Lys203 is subject to N6-carboxylysine. His295 acts as the Proton acceptor in catalysis. Substrate-binding residues include Arg296, His328, and Ser380.

It belongs to the RuBisCO large chain family. Type I subfamily. Heterohexadecamer of 8 large chains and 8 small chains. Mg(2+) is required as a cofactor.

It catalyses the reaction 2 (2R)-3-phosphoglycerate + 2 H(+) = D-ribulose 1,5-bisphosphate + CO2 + H2O. The enzyme catalyses D-ribulose 1,5-bisphosphate + O2 = 2-phosphoglycolate + (2R)-3-phosphoglycerate + 2 H(+). RuBisCO catalyzes two reactions: the carboxylation of D-ribulose 1,5-bisphosphate, the primary event in carbon dioxide fixation, as well as the oxidative fragmentation of the pentose substrate. Both reactions occur simultaneously and in competition at the same active site. This chain is Ribulose bisphosphate carboxylase large chain 1, found in Bradyrhizobium sp. (strain ORS 278).